We begin with the raw amino-acid sequence, 101 residues long: MAKTSMKAREAKRAQLVAKFAEKRAALKAIIANPASSDEDRWDAVLKLQALPRDSSASRQRNRCNQTGRPHGFLRKFGLSRIKLREATMRGEVPGLRKASW.

Belongs to the universal ribosomal protein uS14 family. In terms of assembly, part of the 30S ribosomal subunit. Contacts proteins S3 and S10.

Binds 16S rRNA, required for the assembly of 30S particles and may also be responsible for determining the conformation of the 16S rRNA at the A site. This Shewanella sp. (strain MR-4) protein is Small ribosomal subunit protein uS14.